A 159-amino-acid chain; its full sequence is 6,7-dimethyl-8-ribityllumazine synthase (159 aa).

Residues phenylalanine 22, 56-58 (AFE), and 80-82 (AVI) each bind 5-amino-6-(D-ribitylamino)uracil. 85-86 (AT) lines the (2S)-2-hydroxy-3-oxobutyl phosphate pocket. The Proton donor role is filled by histidine 88. Residue phenylalanine 113 participates in 5-amino-6-(D-ribitylamino)uracil binding. A (2S)-2-hydroxy-3-oxobutyl phosphate-binding site is contributed by arginine 127.

This sequence belongs to the DMRL synthase family.

It carries out the reaction (2S)-2-hydroxy-3-oxobutyl phosphate + 5-amino-6-(D-ribitylamino)uracil = 6,7-dimethyl-8-(1-D-ribityl)lumazine + phosphate + 2 H2O + H(+). The protein operates within cofactor biosynthesis; riboflavin biosynthesis; riboflavin from 2-hydroxy-3-oxobutyl phosphate and 5-amino-6-(D-ribitylamino)uracil: step 1/2. In terms of biological role, catalyzes the formation of 6,7-dimethyl-8-ribityllumazine by condensation of 5-amino-6-(D-ribitylamino)uracil with 3,4-dihydroxy-2-butanone 4-phosphate. This is the penultimate step in the biosynthesis of riboflavin. The chain is 6,7-dimethyl-8-ribityllumazine synthase from Lactiplantibacillus plantarum (strain ATCC BAA-793 / NCIMB 8826 / WCFS1) (Lactobacillus plantarum).